Reading from the N-terminus, the 457-residue chain is ATP synthase subunit beta (457 aa).

Gly147–Thr154 contributes to the ATP binding site.

It belongs to the ATPase alpha/beta chains family. In terms of assembly, F-type ATPases have 2 components, CF(1) - the catalytic core - and CF(0) - the membrane proton channel. CF(1) has five subunits: alpha(3), beta(3), gamma(1), delta(1), epsilon(1). CF(0) has three main subunits: a(1), b(2) and c(9-12). The alpha and beta chains form an alternating ring which encloses part of the gamma chain. CF(1) is attached to CF(0) by a central stalk formed by the gamma and epsilon chains, while a peripheral stalk is formed by the delta and b chains.

It localises to the cell inner membrane. It carries out the reaction ATP + H2O + 4 H(+)(in) = ADP + phosphate + 5 H(+)(out). In terms of biological role, produces ATP from ADP in the presence of a proton gradient across the membrane. The catalytic sites are hosted primarily by the beta subunits. The chain is ATP synthase subunit beta from Haemophilus influenzae (strain 86-028NP).